A 325-amino-acid chain; its full sequence is MARKKISVIGAGNVGATVAQFLAAKQLGDVYLFDVVDGIPEGKALDIQEGAPHWRYDLDVVGFSTSDETKYKNMEGSDVIVVTAGLARKPGMSRDDLFDKNVEIISDVSRNIKKYSPDSIIVVVSNPADIMAYALQKFTGIDPSKIMGLGGSLDSSRFRTFLAKELNVSVEDVNAFVIGGHGDDMVPFIRYSSVAGIPIENLLSKEKIDEIVKRTRFGGGEIVNYLKTGSAFYAPGISITAMVESVIMDKKRVIPCAAYITGKHADHYGIRDKFIGVPIKIGEKGVEQIYDIDFKPDELELWKKSVASVEASSKKVDEWIAKHAH.

Residues 10-15 (GAGNVG) and aspartate 34 each bind NAD(+). Arginine 88 and arginine 94 together coordinate substrate. Residues asparagine 101 and 124–126 (VSN) each bind NAD(+). Residues asparagine 126 and arginine 157 each coordinate substrate. The active-site Proton acceptor is histidine 181.

It belongs to the LDH/MDH superfamily.

The catalysed reaction is (S)-malate + NAD(+) = oxaloacetate + NADH + H(+). Catalyzes the reversible oxidation of malate to oxaloacetate. The protein is Malate dehydrogenase (mdh) of Thermoplasma acidophilum (strain ATCC 25905 / DSM 1728 / JCM 9062 / NBRC 15155 / AMRC-C165).